We begin with the raw amino-acid sequence, 147 residues long: Ubiquitin-like-conjugating enzyme ATG10 (147 aa).

Residue C116 is the Glycyl thioester intermediate of the active site.

The protein belongs to the ATG10 family. Forms homooligomers. Interacts with ATG10. Interacts with ATG7 and ATG12.

Its subcellular location is the preautophagosomal structure membrane. E2-like enzyme required for the cytoplasm to vacuole transport (Cvt), autophagy and nucleophagy. Acts as an E2-like enzyme that catalyzes the conjugation of ATG12 to ATG5. ATG12 conjugation to ATG5 is required for proper localization of ATG8 to the preautophagosomal structure (PAS). Likely serves as an ATG5-recognition molecule. The chain is Ubiquitin-like-conjugating enzyme ATG10 from Kluyveromyces marxianus (strain DMKU3-1042 / BCC 29191 / NBRC 104275) (Yeast).